Here is a 189-residue protein sequence, read N- to C-terminus: Large ribosomal subunit protein eL18 (189 aa).

It belongs to the eukaryotic ribosomal protein eL18 family.

Its subcellular location is the cytoplasm. The polypeptide is Large ribosomal subunit protein eL18 (RpL18) (Drosophila pseudoobscura pseudoobscura (Fruit fly)).